The primary structure comprises 325 residues: tRNA dimethylallyltransferase (325 aa).

17–24 (GPTASGKT) lines the ATP pocket. A substrate-binding site is contributed by 19-24 (TASGKT). Interaction with substrate tRNA regions lie at residues 42 to 45 (DSAL), 166 to 170 (QRIQR), 251 to 256 (RCVGYR), and 284 to 291 (KRQITWLR).

The protein belongs to the IPP transferase family. As to quaternary structure, monomer. Mg(2+) serves as cofactor.

It catalyses the reaction adenosine(37) in tRNA + dimethylallyl diphosphate = N(6)-dimethylallyladenosine(37) in tRNA + diphosphate. In terms of biological role, catalyzes the transfer of a dimethylallyl group onto the adenine at position 37 in tRNAs that read codons beginning with uridine, leading to the formation of N6-(dimethylallyl)adenosine (i(6)A). This chain is tRNA dimethylallyltransferase, found in Burkholderia multivorans (strain ATCC 17616 / 249).